We begin with the raw amino-acid sequence, 239 residues long: MEGGGGGADAQAQAQPVAQAPPAMQPMQQLSRYESQKRRDWNTFLQYLRNHRPPLTLARCSGAHVIEFLKYLDQFGKTKVHASGCAYYGQPSPPAPCPCPLRQAWGSLDALIGRLRAAYEESGHAPESNPFAARAVRIYLREVRDAQAKARGIPYEKKKRKRTQQQQPPPQPPLPPQHQPGAAAGEASSSSSAAAAAVAAEGSGSSAATAAATSQTGGGGGSTTTTTASAAAPTTATRV.

Disordered regions lie at residues methionine 1–serine 35 and lysine 149–valine 239. A compositionally biased stretch (low complexity) spans aspartate 9–glutamine 29. The ALOG domain maps to arginine 32–lysine 159. The Nuclear localization signal signature appears at lysine 157 to lysine 161. Residues glutamine 167–histidine 178 show a composition bias toward pro residues. 2 stretches are compositionally biased toward low complexity: residues glutamine 179 to glutamine 215 and threonine 223 to valine 239.

Belongs to the plant homeotic and developmental regulators ALOG protein family.

The protein localises to the nucleus. Its function is as follows. Probable transcription regulator that acts as a developmental regulator by promoting cell growth in response to light. The sequence is that of Protein G1-like8 from Oryza sativa subsp. indica (Rice).